The sequence spans 164 residues: FMN reductase (NADH) RutF (164 aa).

This sequence belongs to the non-flavoprotein flavin reductase family. RutF subfamily.

It catalyses the reaction FMNH2 + NAD(+) = FMN + NADH + 2 H(+). In terms of biological role, catalyzes the reduction of FMN to FMNH2 which is used to reduce pyrimidine by RutA via the Rut pathway. The polypeptide is FMN reductase (NADH) RutF (Klebsiella variicola (strain At-22)).